Consider the following 118-residue polypeptide: Large ribosomal subunit protein uL18 (118 aa).

The protein belongs to the universal ribosomal protein uL18 family. In terms of assembly, part of the 50S ribosomal subunit; part of the 5S rRNA/L5/L18/L25 subcomplex. Contacts the 5S and 23S rRNAs.

Functionally, this is one of the proteins that bind and probably mediate the attachment of the 5S RNA into the large ribosomal subunit, where it forms part of the central protuberance. In Campylobacter concisus (strain 13826), this protein is Large ribosomal subunit protein uL18.